An 886-amino-acid chain; its full sequence is cytokinesis protein 3 (886 aa).

Residues 6 to 67 (QLPCMVRALY…PSNFVHCLDI (62 aa)) form the SH3 domain. The span at 72–88 (PGSSMSRTSASSFRYSS) shows a compositional bias: low complexity. Residues 72–189 (PGSSMSRTSA…DLSRSTPSPL (118 aa)) form a disordered region. Positions 89-104 (PQKSSIDTPITSSDQG) are enriched in polar residues. Residues 135 to 154 (LNSLGSSLSLKKSVSRPPSS) show a composition bias toward low complexity. Residues 155 to 188 (MSRTNLDVSSRWDNTADNDSQIDAQDLSRSTPSP) are compositionally biased toward polar residues. At Ser-213 the chain carries Phosphoserine. 2 disordered regions span residues 219-290 (TKST…SPSD) and 358-393 (RRGS…SPHT). Residues 253–264 (DNSSKPRTSLQP) show a composition bias toward polar residues.

This sequence belongs to the CYK3 family.

The protein resides in the cell tip. Functionally, involved in cytokinesis. The polypeptide is cytokinesis protein 3 (cyk3) (Schizosaccharomyces pombe (strain 972 / ATCC 24843) (Fission yeast)).